The sequence spans 155 residues: DNA-directed RNA polymerases I, II, and III subunit RPABC2 (155 aa).

Residues 1 to 19 show a composition bias toward acidic residues; sequence MSDYEEAFNDGNENFEDFD. Residues 1-57 are disordered; it reads MSDYEEAFNDGNENFEDFDVEHFSDEETYEEKPQFKDGETTDANGKTIVTGGNGPED. A compositionally biased stretch (basic and acidic residues) spans 20–39; it reads VEHFSDEETYEEKPQFKDGE. Serine 24 is subject to Phosphoserine. The interval 111-132 is leucine-zipper; sequence LEGETDPLRIAMKELAEKKIPL.

It belongs to the archaeal Rpo6/eukaryotic RPB6 RNA polymerase subunit family. As to quaternary structure, component of the RNA polymerase I (Pol I), RNA polymerase II (Pol II) and RNA polymerase III (Pol III) complexes. Component of the RNA polymerase I (Pol I) complex consisting of 14 subunits: RPA135, RPA190, RPC40, RPA14, RPB5, RPO26, RPA43, RPB8, RPA12, RPB10, RPC19, RPC10, RPA49 and RPA34. The complex is composed of a horseshoe-shaped core containing ten subunits (RPA135, RPA190, RPB5, RPO26, RPB8, RPB10, RPC10, RPA12, RPC19 and RPC40) where RPA135 and RPA190 form the DNA-binding cleft. Outside of the core, RPA14 and RPA43 form the stalk that mediates interactions with transcription initiation factors and newly synthesized RNA. Component of the RNA polymerase II (Pol II) complex consisting of 12 subunits: RPO21, RPB2, RPB3, RPB4, RPB5, RPO26, RPB7, RPB8, RPB9, RPB10 and RPC10. Component of the RNA polymerase III (Pol III) complex consisting of 17 subunits.

The protein localises to the cytoplasm. It localises to the nucleus. In terms of biological role, DNA-dependent RNA polymerases catalyze the transcription of DNA into RNA using the four ribonucleoside triphosphates as substrates. Common component of RNA polymerases I, II and III which synthesize ribosomal RNA precursors, mRNA precursors and many functional non-coding RNAs, and small RNAs, such as 5S rRNA and tRNAs, respectively. Pol II is the central component of the basal RNA polymerase II transcription machinery. RNA polymerases are composed of mobile elements that move relative to each other. In Pol II, RPB6 is part of the clamp element and together with parts of RPB1 and RPB2 forms a pocket to which the RPB4-RPB7 subcomplex binds. This Saccharomyces cerevisiae (strain ATCC 204508 / S288c) (Baker's yeast) protein is DNA-directed RNA polymerases I, II, and III subunit RPABC2 (RPO26).